The following is a 454-amino-acid chain: Cathepsin C (454 aa).

An N-terminal signal peptide occupies residues M1–A20. Positions D21–N217 are excised as a propeptide. A glycan (N-linked (GlcNAc...) asparagine) is linked at N25. Disulfide bonds link C26–C107, C244–C287, and C280–C321. Residue C247 is part of the active site. N265 carries an N-linked (GlcNAc...) asparagine glycan. Position 291 (F291) interacts with chloride. N326 carries an N-linked (GlcNAc...) asparagine glycan. Y337 provides a ligand contact to chloride. Active-site residues include H398 and N420.

The protein belongs to the peptidase C1 family. Requires chloride as cofactor.

The protein resides in the lysosome. Functionally, thiol protease. Has a role as a digestive enzyme. In Schistosoma mansoni (Blood fluke), this protein is Cathepsin C.